Reading from the N-terminus, the 59-residue chain is Small, acid-soluble spore protein H 2 (59 aa).

The protein belongs to the SspH family.

The protein resides in the spore core. The sequence is that of Small, acid-soluble spore protein H 2 (sspH2) from Bacillus anthracis.